The chain runs to 265 residues: Aquaporin-5 (265 aa).

The Cytoplasmic segment spans residues 1–12; that stretch reads MKKEVCSLAFFK. A helical transmembrane segment spans residues 13–33; that stretch reads AVFAEFLATLIFVFFGLGSAL. Over 34-39 the chain is Extracellular; sequence KWPSAL. The helical transmembrane segment at 40-60 threads the bilayer; it reads PTILQISIAFGLAIGTLAQAL. Over 61–65 the chain is Cytoplasmic; sequence GPVSG. Positions 66–74 form an intramembrane region, discontinuously helical; sequence GHINPAITL. The short motif at 69–71 is the NPA 1 element; the sequence is NPA. Residues 75–87 are Cytoplasmic-facing; that stretch reads ALLIGNQISLLRA. The helical transmembrane segment at 88 to 108 threads the bilayer; the sequence is VFYVAAQLVGAIAGAGILYWL. Over 109–126 the chain is Extracellular; the sequence is APLNARGNLAVNALNNNT. Residue asparagine 124 is glycosylated (N-linked (GlcNAc...) asparagine). Residues 127–147 form a helical membrane-spanning segment; that stretch reads TPGKAMVVELILTFQLALCIF. At 148–158 the chain is on the cytoplasmic side; sequence SSTDSRRTSPV. Residues 159 to 179 form a helical membrane-spanning segment; the sequence is GSPALSIGLSVTLGHLVGIYF. A topological domain (extracellular) is located at residue threonine 180. Residues 181 to 191 constitute an intramembrane region (discontinuously helical); the sequence is GCSMNPARSFG. Positions 185–187 match the NPA 2 motif; that stretch reads NPA. Residues 192-203 are Extracellular-facing; it reads PAVVMNRFSPSH. Residues 204–224 form a helical membrane-spanning segment; the sequence is WVFWVGPIVGAMLAAILYFYL. The Cytoplasmic portion of the chain corresponds to 225–265; the sequence is LFPSSLSLHDRVAVVKGTYEPEEDWEDHREERKKTIELTAH.

It belongs to the MIP/aquaporin (TC 1.A.8) family. Homotetramer; each monomer provides an independent water pore. Interacts with TRPV4; the interaction is probably indirect and regulates TRPV4 activation by hypotonicity. Salivary glands, lacrimal glands, corneal epithelium in eye, trachea and lung.

The protein resides in the apical cell membrane. The protein localises to the cell membrane. It localises to the cytoplasmic vesicle membrane. It catalyses the reaction H2O(in) = H2O(out). In terms of biological role, aquaporins form homotetrameric transmembrane channels, with each monomer independently mediating water transport across the plasma membrane along its osmotic gradient. Plays an important role in fluid secretion in salivary glands. Required for TRPV4 activation by hypotonicity. Together with TRPV4, controls regulatory volume decrease in salivary epithelial cells. Seems to play a redundant role in water transport in the eye, lung and in sweat glands. This Rattus norvegicus (Rat) protein is Aquaporin-5.